The primary structure comprises 537 residues: Glutamyl-tRNA reductase, chloroplastic (537 aa).

Residues Met-1–Arg-48 constitute a chloroplast transit peptide. Residues Thr-134–Arg-137, Ser-194, Glu-199–Gln-201, and Gln-205 each bind substrate. The active-site Nucleophile is Cys-135. Gly-276 to Gly-281 lines the NADP(+) pocket.

It belongs to the glutamyl-tRNA reductase family.

The protein localises to the plastid. Its subcellular location is the chloroplast. The catalysed reaction is (S)-4-amino-5-oxopentanoate + tRNA(Glu) + NADP(+) = L-glutamyl-tRNA(Glu) + NADPH + H(+). The protein operates within porphyrin-containing compound metabolism; protoporphyrin-IX biosynthesis; 5-aminolevulinate from L-glutamyl-tRNA(Glu): step 1/2. Its function is as follows. Catalyzes the NADPH-dependent reduction of glutamyl-tRNA(Glu) to glutamate 1-semialdehyde (GSA). The protein is Glutamyl-tRNA reductase, chloroplastic of Oryza sativa subsp. japonica (Rice).